Here is a 163-residue protein sequence, read N- to C-terminus: Transcription antitermination protein NusB (163 aa).

This sequence belongs to the NusB family.

Its function is as follows. Involved in transcription antitermination. Required for transcription of ribosomal RNA (rRNA) genes. Binds specifically to the boxA antiterminator sequence of the ribosomal RNA (rrn) operons. In Granulibacter bethesdensis (strain ATCC BAA-1260 / CGDNIH1), this protein is Transcription antitermination protein NusB.